A 394-amino-acid chain; its full sequence is Elongation factor Tu (394 aa).

The tr-type G domain occupies 10–204 (KPHVNIGTIG…AVDEYIPTPD (195 aa)). The tract at residues 19-26 (GHIDHGKT) is G1. Position 19 to 26 (19 to 26 (GHIDHGKT)) interacts with GTP. Residue Thr-26 participates in Mg(2+) binding. A G2 region spans residues 60 to 64 (GITIN). The segment at 81–84 (DCPG) is G3. Residues 81–85 (DCPGH) and 136–139 (NKCD) each bind GTP. Residues 136–139 (NKCD) form a G4 region. The interval 174 to 176 (SAL) is G5.

Belongs to the TRAFAC class translation factor GTPase superfamily. Classic translation factor GTPase family. EF-Tu/EF-1A subfamily. As to quaternary structure, monomer.

It is found in the cytoplasm. It carries out the reaction GTP + H2O = GDP + phosphate + H(+). Its function is as follows. GTP hydrolase that promotes the GTP-dependent binding of aminoacyl-tRNA to the A-site of ribosomes during protein biosynthesis. This chain is Elongation factor Tu, found in Mycoplasmoides gallisepticum (strain R(low / passage 15 / clone 2)) (Mycoplasma gallisepticum).